The sequence spans 215 residues: Large ribosomal subunit protein uL4 (215 aa).

The disordered stretch occupies residues 46 to 76; sequence TAKSKNRAEVSGGGRKPWAQKGGGRARAGSI. Gly residues predominate over residues 56-71; the sequence is SGGGRKPWAQKGGGRA.

It belongs to the universal ribosomal protein uL4 family. Part of the 50S ribosomal subunit.

Its function is as follows. One of the primary rRNA binding proteins, this protein initially binds near the 5'-end of the 23S rRNA. It is important during the early stages of 50S assembly. It makes multiple contacts with different domains of the 23S rRNA in the assembled 50S subunit and ribosome. In terms of biological role, forms part of the polypeptide exit tunnel. The polypeptide is Large ribosomal subunit protein uL4 (Helicobacter acinonychis (strain Sheeba)).